Here is a 135-residue protein sequence, read N- to C-terminus: Serine protease inhibitor swm-1 (135 aa).

The N-terminal stretch at 1-16 (MRILVIITCIVAVATA) is a signal peptide. 10 cysteine pairs are disulfide-bonded: cysteine 20–cysteine 53, cysteine 29–cysteine 48, cysteine 33–cysteine 44, cysteine 37–cysteine 73, cysteine 55–cysteine 67, cysteine 80–cysteine 114, cysteine 89–cysteine 109, cysteine 93–cysteine 105, cysteine 97–cysteine 133, and cysteine 116–cysteine 127. TIL domains lie at 20 to 73 (CEAN…VSEC) and 80 to 133 (CPEN…KKDC). N-linked (GlcNAc...) asparagine glycosylation is present at asparagine 83.

In male, expressed in the vas deferens cuboidal cells and, in posterior body wall and male-specific diagonal muscles. In hermaphrodites, expressed in posterior body wall muscles and spermatheca.

It is found in the secreted. The protein localises to the cytoplasmic vesicle. The protein resides in the secretory vesicle lumen. In terms of biological role, serine protease inhibitor. Probably by inhibiting serine protease tyr-5 in males, prevents the maturation of spermatids into mature motile spermatozoa until their transfer into a hermaphrodite. Also required for efficient sperm transfer and thus for male fertility. The polypeptide is Serine protease inhibitor swm-1 (Caenorhabditis elegans).